Reading from the N-terminus, the 235-residue chain is Replication protein (235 aa).

DNA is bound at residue Y149.

It belongs to the Gram-positive plasmids replication protein type 1 family.

Produces a single-strand nick in a specific site of the plasmid, and this nick results in single-strand replication by rolling circle mechanism. In Bacillus sp, this protein is Replication protein (repB).